Here is a 525-residue protein sequence, read N- to C-terminus: NGFI-A-binding protein 2 (525 aa).

The tract at residues 1 to 31 (MHRAPSPTAEQPPGRGDNTRRTPQPRFKASA) is disordered. Position 6 is a phosphoserine (S6). The NCD1 stretch occupies residues 35–113 (ALPRTLGELQ…REWATNPGLF (79 aa)). The tract at residues 135 to 238 (GTRKGSMSNG…GAGGGPDRLE (104 aa)) is disordered. S157, S159, S162, and S171 each carry phosphoserine. Positions 212–234 (AGGGVSEGPGVGGVAAGGAGGGP) are enriched in gly residues. The NCD2 stretch occupies residues 267 to 356 (LLKLNKKLAR…SRQVARESTY (90 aa)). Residues 353–384 (ESTYLSSLKGSRLHSEELGGPPLKKLKQEVGE) are necessary for nuclear localization. Residue K379 forms a Glycyl lysine isopeptide (Lys-Gly) (interchain with G-Cter in SUMO1) linkage. Residues 381-416 (EVGEQSHNEIQQPPPGPESYAPPYRPSLEEDSASLS) are disordered. S479 bears the Phosphoserine mark. Residues 501 to 525 (APGPHPALVEGRRSSVKVEAEASRQ) are disordered. Residues 510-525 (EGRRSSVKVEAEASRQ) are compositionally biased toward basic and acidic residues. A Glycyl lysine isopeptide (Lys-Gly) (interchain with G-Cter in SUMO1); alternate cross-link involves residue K517. A Glycyl lysine isopeptide (Lys-Gly) (interchain with G-Cter in SUMO2); alternate cross-link involves residue K517.

This sequence belongs to the NAB family. Homomultimers may associate with EGR1 bound to DNA. Sumoylation by EGR2 represses EGR2 transcriptional activity in hindbrain. As to expression, highly expressed in brain and thymus, and at lower levels in spleen, kidney, heart and testis. Isoform 1 is predominantly expressed in testis, whereas isoform 3 is more abundant in thymus.

It localises to the nucleus. Functionally, acts as a transcriptional repressor for zinc finger transcription factors EGR1 and EGR2. Isoform 2 lacks repression ability. The sequence is that of NGFI-A-binding protein 2 (Nab2) from Mus musculus (Mouse).